Consider the following 344-residue polypeptide: Phenylalanine--tRNA ligase alpha subunit (344 aa).

Glu255 is a Mg(2+) binding site.

It belongs to the class-II aminoacyl-tRNA synthetase family. Phe-tRNA synthetase alpha subunit type 1 subfamily. As to quaternary structure, tetramer of two alpha and two beta subunits. It depends on Mg(2+) as a cofactor.

It is found in the cytoplasm. It carries out the reaction tRNA(Phe) + L-phenylalanine + ATP = L-phenylalanyl-tRNA(Phe) + AMP + diphosphate + H(+). This Persephonella marina (strain DSM 14350 / EX-H1) protein is Phenylalanine--tRNA ligase alpha subunit.